The sequence spans 141 residues: Hemoglobin D subunit alpha (141 aa).

The Globin domain occupies 1–141 (MLTEDDKQLI…VSAVLAEKYR (141 aa)). His-58 provides a ligand contact to O2. His-87 contacts heme b.

It belongs to the globin family. In terms of assembly, tetramer of two alpha chains and two beta chains. Red blood cells.

Involved in oxygen transport from the lung to the various peripheral tissues. The protein is Hemoglobin D subunit alpha of Aldabrachelys gigantea (Aldabra giant tortoise).